The primary structure comprises 515 residues: 1-pyrroline-5-carboxylate dehydrogenase 1 (515 aa).

Residues glutamate 286 and cysteine 320 contribute to the active site.

Belongs to the aldehyde dehydrogenase family. RocA subfamily.

It catalyses the reaction L-glutamate 5-semialdehyde + NAD(+) + H2O = L-glutamate + NADH + 2 H(+). The protein operates within amino-acid degradation; L-proline degradation into L-glutamate; L-glutamate from L-proline: step 2/2. The protein is 1-pyrroline-5-carboxylate dehydrogenase 1 (rocA1) of Halalkalibacterium halodurans (strain ATCC BAA-125 / DSM 18197 / FERM 7344 / JCM 9153 / C-125) (Bacillus halodurans).